The sequence spans 376 residues: tRNA-specific 2-thiouridylase MnmA (376 aa).

Residues 17-24 (GMSGGVDS) and Met-43 contribute to the ATP site. Positions 103 to 105 (NPD) are interaction with target base in tRNA. Cys-108 serves as the catalytic Nucleophile. Residues Cys-108 and Cys-204 are joined by a disulfide bond. ATP is bound at residue Gly-132. Residues 154–156 (KDQ) are interaction with tRNA. Cys-204 (cysteine persulfide intermediate) is an active-site residue. An interaction with tRNA region spans residues 316-317 (RY).

It belongs to the MnmA/TRMU family.

The protein resides in the cytoplasm. It catalyses the reaction S-sulfanyl-L-cysteinyl-[protein] + uridine(34) in tRNA + AH2 + ATP = 2-thiouridine(34) in tRNA + L-cysteinyl-[protein] + A + AMP + diphosphate + H(+). In terms of biological role, catalyzes the 2-thiolation of uridine at the wobble position (U34) of tRNA, leading to the formation of s(2)U34. This Pseudomonas savastanoi pv. phaseolicola (strain 1448A / Race 6) (Pseudomonas syringae pv. phaseolicola (strain 1448A / Race 6)) protein is tRNA-specific 2-thiouridylase MnmA.